Here is a 357-residue protein sequence, read N- to C-terminus: UPF0324 membrane protein BMEI1914 (357 aa).

The next 11 membrane-spanning stretches (helical) occupy residues Asn-29–Glu-48, Ala-58–Ala-77, Ser-90–Ile-112, Gly-117–Ile-136, Leu-149–Ala-171, Ala-181–Leu-203, Ile-210–Leu-232, Leu-242–Asn-261, Pro-268–Leu-290, Ala-300–Ile-322, and Leu-334–Val-356.

It belongs to the UPF0324 family.

It localises to the cell membrane. The polypeptide is UPF0324 membrane protein BMEI1914 (Brucella melitensis biotype 1 (strain ATCC 23456 / CCUG 17765 / NCTC 10094 / 16M)).